The chain runs to 225 residues: Uridylate kinase (225 aa).

ATP is bound at residue 9–10 (GS). Glycine 46 provides a ligand contact to UMP. The ATP site is built by glycine 47 and arginine 51. UMP-binding positions include aspartate 67 and 115–121 (THPAHTT). Residues threonine 141, asparagine 142, tyrosine 147, and aspartate 150 each contribute to the ATP site.

It belongs to the UMP kinase family. Homohexamer.

It localises to the cytoplasm. It carries out the reaction UMP + ATP = UDP + ADP. It participates in pyrimidine metabolism; CTP biosynthesis via de novo pathway; UDP from UMP (UMPK route): step 1/1. With respect to regulation, inhibited by UTP. Its function is as follows. Catalyzes the reversible phosphorylation of UMP to UDP. The polypeptide is Uridylate kinase (Methanococcus maripaludis (strain C5 / ATCC BAA-1333)).